The chain runs to 219 residues: Probable 3-beta-hydroxysteroid-Delta(8),Delta(7)-isomerase (219 aa).

4 helical membrane passes run 29–49, 62–82, 119–139, and 181–201; these read ILVP…LISG, LMCW…TFVF, VEGI…YAIA, and FWAY…MIAI. Positions 58-200 constitute an EXPERA domain; sequence TDRWLMCWWA…SWVVIPTMIA (143 aa).

Belongs to the EBP family.

The protein localises to the endoplasmic reticulum membrane. It catalyses the reaction lathosterol = 5alpha-cholest-8-en-3beta-ol. The protein operates within steroid biosynthesis; sterol biosynthesis. Catalyzes the conversion of Delta(8)-sterols to their corresponding Delta(7)-isomers. The polypeptide is Probable 3-beta-hydroxysteroid-Delta(8),Delta(7)-isomerase (Oryza sativa subsp. japonica (Rice)).